A 307-amino-acid chain; its full sequence is Aspartate carbamoyltransferase catalytic subunit (307 aa).

2 residues coordinate carbamoyl phosphate: R56 and T57. K84 contributes to the L-aspartate binding site. Carbamoyl phosphate-binding residues include R106, H136, and Q139. 2 residues coordinate L-aspartate: R169 and R221. The carbamoyl phosphate site is built by A262 and P263.

The protein belongs to the aspartate/ornithine carbamoyltransferase superfamily. ATCase family. As to quaternary structure, heterododecamer (2C3:3R2) of six catalytic PyrB chains organized as two trimers (C3), and six regulatory PyrI chains organized as three dimers (R2).

The catalysed reaction is carbamoyl phosphate + L-aspartate = N-carbamoyl-L-aspartate + phosphate + H(+). It participates in pyrimidine metabolism; UMP biosynthesis via de novo pathway; (S)-dihydroorotate from bicarbonate: step 2/3. Its function is as follows. Catalyzes the condensation of carbamoyl phosphate and aspartate to form carbamoyl aspartate and inorganic phosphate, the committed step in the de novo pyrimidine nucleotide biosynthesis pathway. This Streptococcus pneumoniae (strain 70585) protein is Aspartate carbamoyltransferase catalytic subunit.